We begin with the raw amino-acid sequence, 260 residues long: 3'-5' ssDNA/RNA exonuclease TatD (260 aa).

Positions 91, 127, and 152 each coordinate a divalent metal cation.

The protein belongs to the metallo-dependent hydrolases superfamily. TatD-type hydrolase family. TatD subfamily. Monomer. It depends on Mg(2+) as a cofactor.

It localises to the cytoplasm. Functionally, 3'-5' exonuclease that prefers single-stranded DNA and RNA. May play a role in the H(2)O(2)-induced DNA damage repair. This chain is 3'-5' ssDNA/RNA exonuclease TatD, found in Citrobacter koseri (strain ATCC BAA-895 / CDC 4225-83 / SGSC4696).